The sequence spans 346 residues: MEFSAKQIAEYIQGIIVGDENATVHTFAKIEEGVPGAISFLSNPKYTHYIYDTQSTIVLVNKDFVPEQEVKATLIKVDNAYESLAKLLTLYEMSKPKKTGIDPLAYVAPTAKLGKDVYIAPFACVGDGAEIGDNTSLHPHATVGSHAKVGNNCTLYPHATIYHDCLVGNHCTLHAGCVIGADGFGFAPSPEGYEKIPQIGIAIIEDNVEIGANTCVDRATMGATIVHKGVKLDNLIQIAHNVEVGSHTVMASQVGIAGSTKVGEWCMFGGQVGLAGHIKIGDKVGIGAQAGVPGNVKSNEQILGTPAIDAKNFMKSSAVYKKLPEIYTTLNAMQKEIEELKKQLNK.

Residue His-240 is the Proton acceptor of the active site.

Belongs to the transferase hexapeptide repeat family. LpxD subfamily. Homotrimer.

It catalyses the reaction a UDP-3-O-[(3R)-3-hydroxyacyl]-alpha-D-glucosamine + a (3R)-hydroxyacyl-[ACP] = a UDP-2-N,3-O-bis[(3R)-3-hydroxyacyl]-alpha-D-glucosamine + holo-[ACP] + H(+). Its pathway is bacterial outer membrane biogenesis; LPS lipid A biosynthesis. Catalyzes the N-acylation of UDP-3-O-acylglucosamine using 3-hydroxyacyl-ACP as the acyl donor. Is involved in the biosynthesis of lipid A, a phosphorylated glycolipid that anchors the lipopolysaccharide to the outer membrane of the cell. The polypeptide is UDP-3-O-acylglucosamine N-acyltransferase (Phocaeicola vulgatus (strain ATCC 8482 / DSM 1447 / JCM 5826 / CCUG 4940 / NBRC 14291 / NCTC 11154) (Bacteroides vulgatus)).